Reading from the N-terminus, the 860-residue chain is uncharacterized protein (860 aa).

2 stretches are compositionally biased toward basic and acidic residues: residues 334–345 (LEKKSLQSDSKN) and 536–551 (EDQK…LSDK). Disordered stretches follow at residues 334 to 360 (LEKK…LRKE), 530 to 551 (EEDD…LSDK), 708 to 798 (ARKT…EDEF), and 813 to 842 (PFNE…RKAI). Composition is skewed to acidic residues over residues 716–725 (DEEGEIDEDE), 738–750 (EMDE…DSEE), and 813–824 (PFNETDDEEEIQ). Phosphoserine occurs at positions 744 and 748.

This sequence belongs to the CBF/MAK21 family.

This is an uncharacterized protein from Schizosaccharomyces pombe (strain 972 / ATCC 24843) (Fission yeast).